A 1244-amino-acid polypeptide reads, in one-letter code: Ras-specific guanine nucleotide-releasing factor 1 (1244 aa).

The 108-residue stretch at 22–129 folds into the PH 1 domain; the sequence is DGTRKGYLSK…WVAAIARASY (108 aa). The residue at position 71 (Ser-71) is a Phosphoserine; by PLK2. Residues 204–229 enclose the IQ domain; sequence KKIKKVQSFLRGWLCRRKWKNIIQDY. A DH domain is found at 240 to 426; sequence KRNQVVFSML…EELSRVMHDE (187 aa). A PH 2 domain is found at 456–582; it reads TFVRQGSLIQ…WTSDIIQCVD (127 aa). Residues Ser-575 and Ser-611 each carry the phosphoserine; by PLK2 modification. Residues 629-743 form the N-terminal Ras-GEF domain; it reads KVLQIRYASV…RRRKLSLNIP (115 aa). The tract at residues 707-730 is disordered; that stretch reads GDAPKSPRASRKFSSPPPLAIGTS. A Phosphoserine modification is found at Ser-739. Residues Ser-760 and Ser-781 each carry the phosphoserine; by PLK2 modification. The segment at 800–840 is disordered; it reads TLEESSGFRKPTSDILKEESDDDQSDVDDTEVSPPTPKSFR. The segment covering 818–830 has biased composition (acidic residues); that stretch reads ESDDDQSDVDDTE. Position 854 is a phosphoserine; by PLK2 (Ser-854). One can recognise a Ras-GEF domain in the interval 1009 to 1241; that stretch reads SAMEIAEQLT…YEASLRIEPK (233 aa).

In terms of assembly, homooligomer and heterooligomer with RASGRF2. Interacts with USP8, thereby regulating its stability. Post-translationally, phosphorylated by PLK2, leading to ubiquitination and degradation by the proteasome. Ubiquitinated and degraded following phosphorylation by PLK2. In terms of processing, phosphorylated by SRC and LCK. Phosphorylation by LCK increases its capacity to stimulate the GDP/GTP exchange on Ras, whereas its phosphorylation by SRC seems not to have an effect on stimulation activity.

Functionally, promotes the exchange of Ras-bound GDP by GTP. The protein is Ras-specific guanine nucleotide-releasing factor 1 (Rasgrf1) of Rattus norvegicus (Rat).